We begin with the raw amino-acid sequence, 158 residues long: Small ribosomal subunit protein uS9 (158 aa).

Positions 1-20 (MTEAVETETVEPTTDEATAA) are disordered. Residues 10–20 (VEPTTDEATAA) are compositionally biased toward low complexity.

Belongs to the universal ribosomal protein uS9 family.

The protein is Small ribosomal subunit protein uS9 of Mycobacterium sp. (strain JLS).